Consider the following 306-residue polypeptide: MTTDWAEIACEVPAEMVDSLADFLVELTGNGVGIDNLHLDTFSLDTLEDTPLKSVKGYLPLDDSLEEMRIRIEQFLAQTGPSFPGYVYAPPVVTVIRNEDWANNWKVHFKPVRIGQRLVIKPTWEEYLKLEGDLVIQIDPGMAFGTGAHPTTKMCLEALERICFDASGGKLPSPVLDVGTGSGVLSIAAALLGAKEIVAVDIDPEAVRVTMENLELNGVADLVAASTTSLEQLPGGFRVVVANILAEELVRLADELTARVAPGGWLILSGILTEKEAFVCAAFNSLELVENPKELEWSCLSFRKPL.

S-adenosyl-L-methionine-binding residues include T152, G179, D201, and N243.

This sequence belongs to the methyltransferase superfamily. PrmA family.

Its subcellular location is the cytoplasm. The catalysed reaction is L-lysyl-[protein] + 3 S-adenosyl-L-methionine = N(6),N(6),N(6)-trimethyl-L-lysyl-[protein] + 3 S-adenosyl-L-homocysteine + 3 H(+). Functionally, methylates ribosomal protein L11. The polypeptide is Ribosomal protein L11 methyltransferase (Citrifermentans bemidjiense (strain ATCC BAA-1014 / DSM 16622 / JCM 12645 / Bem) (Geobacter bemidjiensis)).